The chain runs to 314 residues: Ribosomal protein L11 methyltransferase (314 aa).

S-adenosyl-L-methionine-binding residues include threonine 161, glycine 182, aspartate 204, and asparagine 248.

It belongs to the methyltransferase superfamily. PrmA family.

Its subcellular location is the cytoplasm. It catalyses the reaction L-lysyl-[protein] + 3 S-adenosyl-L-methionine = N(6),N(6),N(6)-trimethyl-L-lysyl-[protein] + 3 S-adenosyl-L-homocysteine + 3 H(+). Its function is as follows. Methylates ribosomal protein L11. This chain is Ribosomal protein L11 methyltransferase, found in Listeria monocytogenes serotype 4b (strain CLIP80459).